Consider the following 226-residue polypeptide: UPF0758 protein CHY_0341 (226 aa).

Residues 104 to 226 (NFLNPDDVYN…YISMKAERLF (123 aa)) enclose the MPN domain. The Zn(2+) site is built by H175, H177, and D188. The short motif at 175 to 188 (HNHPSGDPTPSKED) is the JAMM motif element.

The protein belongs to the UPF0758 family.

The polypeptide is UPF0758 protein CHY_0341 (Carboxydothermus hydrogenoformans (strain ATCC BAA-161 / DSM 6008 / Z-2901)).